A 126-amino-acid chain; its full sequence is Holo-[acyl-carrier-protein] synthase (126 aa).

Aspartate 9 and glutamate 58 together coordinate Mg(2+).

The protein belongs to the P-Pant transferase superfamily. AcpS family. It depends on Mg(2+) as a cofactor.

Its subcellular location is the cytoplasm. The catalysed reaction is apo-[ACP] + CoA = holo-[ACP] + adenosine 3',5'-bisphosphate + H(+). Its function is as follows. Transfers the 4'-phosphopantetheine moiety from coenzyme A to a Ser of acyl-carrier-protein. The protein is Holo-[acyl-carrier-protein] synthase of Escherichia coli O127:H6 (strain E2348/69 / EPEC).